Consider the following 378-residue polypeptide: Uroporphyrinogen decarboxylase (378 aa).

Substrate contacts are provided by residues arginine 40–arginine 44, aspartate 90, tyrosine 167, serine 222, and histidine 355.

Belongs to the uroporphyrinogen decarboxylase family. As to quaternary structure, homodimer.

The protein localises to the cytoplasm. The enzyme catalyses uroporphyrinogen III + 4 H(+) = coproporphyrinogen III + 4 CO2. It participates in porphyrin-containing compound metabolism; protoporphyrin-IX biosynthesis; coproporphyrinogen-III from 5-aminolevulinate: step 4/4. Its function is as follows. Catalyzes the decarboxylation of four acetate groups of uroporphyrinogen-III to yield coproporphyrinogen-III. The chain is Uroporphyrinogen decarboxylase from Psychrobacter arcticus (strain DSM 17307 / VKM B-2377 / 273-4).